Consider the following 197-residue polypeptide: ATP-dependent Clp protease proteolytic subunit (197 aa).

The active-site Nucleophile is the Ser98. His123 is a catalytic residue.

Belongs to the peptidase S14 family. In terms of assembly, fourteen ClpP subunits assemble into 2 heptameric rings which stack back to back to give a disk-like structure with a central cavity, resembling the structure of eukaryotic proteasomes.

The protein resides in the cytoplasm. The catalysed reaction is Hydrolysis of proteins to small peptides in the presence of ATP and magnesium. alpha-casein is the usual test substrate. In the absence of ATP, only oligopeptides shorter than five residues are hydrolyzed (such as succinyl-Leu-Tyr-|-NHMec, and Leu-Tyr-Leu-|-Tyr-Trp, in which cleavage of the -Tyr-|-Leu- and -Tyr-|-Trp bonds also occurs).. Functionally, cleaves peptides in various proteins in a process that requires ATP hydrolysis. Has a chymotrypsin-like activity. Plays a major role in the degradation of misfolded proteins. The sequence is that of ATP-dependent Clp protease proteolytic subunit from Limosilactobacillus reuteri (strain DSM 20016) (Lactobacillus reuteri).